A 288-amino-acid polypeptide reads, in one-letter code: Lysosomal thioesterase PPT2-B (288 aa).

Residues 1-20 (MRGYLLLLPLLLCLVDNSVS) form the signal peptide. Cys95 and Cys103 are disulfide-bonded. The Nucleophile role is filled by Ser97. N-linked (GlcNAc...) asparagine glycosylation is present at Asn143. A disulfide bond links Cys151 and Cys162. The N-linked (GlcNAc...) asparagine glycan is linked to Asn192. Active-site residues include Asp214 and His269. Asn275 carries an N-linked (GlcNAc...) asparagine glycan.

It belongs to the palmitoyl-protein thioesterase family.

The protein localises to the lysosome. It catalyses the reaction hexadecanoyl-CoA + H2O = hexadecanoate + CoA + H(+). The enzyme catalyses S-hexadecanoyl-N-acetylcysteamine + H2O = N-acetylcysteamine + hexadecanoate + H(+). Functionally, catalyzes the cleavage of thioester bonds from S-palmitoyl-CoA or S-palmitoyl-N-acetylcysteamine (unbranched structures) but does not have activity against palmitoylcysteine or palmitoylated proteins, branched structures or bulky head groups. Conversely, hydrolyzes both long and short chain fatty acyl-CoA substrate. The polypeptide is Lysosomal thioesterase PPT2-B (ppt2-b) (Xenopus laevis (African clawed frog)).